The following is a 443-amino-acid chain: MAQFFKAKPNSSKQLSAKVSLQVTRLDHLGAGIAQHNGKVVFIPGVLPGEKAMVQLTEQKKRYSRAKLLNLETHSIDRVEPKCAHYHQCGGCDLQHLSLEKQRLHKESALVSLMAKLSHTEAEALVPAIIGEQWHYRRRARLATFYHQETKRTTLGFRAQSSKEVIDISSCPVLAKSLSELISPLSKLLNQLASRRALGHVELIDVDNGQFVVVRATKELSDKDKEKLLSFAQEHKVNLIVQGNEGELLVIKGPKELPFYTLNSDIKLSFTPGNFVQVNGEINRAMVDQAVQWLDVKADERVLDLFCGVGNFSLPLAKSGAEVIGVEGVPEMVAQARINAKQSDLSDVTFFHTDLSADLSKEPWLGKVDKLLLDPARAGAFESLQWLKKMKPKSIVYVSCDPSSLARDSEPLLKHGYKLKKLGLVDMFPQTHHIEAMALFELS.

The 59-residue stretch at 12–70 (SKQLSAKVSLQVTRLDHLGAGIAQHNGKVVFIPGVLPGEKAMVQLTEQKKRYSRAKLLN) folds into the TRAM domain. Residues cysteine 83, cysteine 89, cysteine 92, and cysteine 171 each contribute to the [4Fe-4S] cluster site. S-adenosyl-L-methionine is bound by residues glutamine 277, phenylalanine 306, asparagine 311, glutamate 327, aspartate 354, and aspartate 374. Cysteine 400 (nucleophile) is an active-site residue.

It belongs to the class I-like SAM-binding methyltransferase superfamily. RNA M5U methyltransferase family. RlmD subfamily.

It catalyses the reaction uridine(1939) in 23S rRNA + S-adenosyl-L-methionine = 5-methyluridine(1939) in 23S rRNA + S-adenosyl-L-homocysteine + H(+). Functionally, catalyzes the formation of 5-methyl-uridine at position 1939 (m5U1939) in 23S rRNA. The chain is 23S rRNA (uracil(1939)-C(5))-methyltransferase RlmD from Shewanella woodyi (strain ATCC 51908 / MS32).